Here is a 370-residue protein sequence, read N- to C-terminus: Platelet-derived growth factor D (370 aa).

Positions 1 to 18 (MHRLIFVYTLICANFCSC) are cleaved as a signal peptide. The 119-residue stretch at 52-170 (RDETIQVKGN…PGFKIYYSLL (119 aa)) folds into the CUB domain. The cysteines at positions 109 and 131 are disulfide-linked. N276 is a glycosylation site (N-linked (GlcNAc...) asparagine). Cystine bridges form between C302/C360 and C306/C362.

Belongs to the PDGF/VEGF growth factor family. Homodimer; disulfide-linked. Interacts with PDGFRB homodimers, and with heterodimers formed by PDGFRA and PDGFRB. Post-translationally, activated by proteolytic cleavage. Proteolytic removal of the N-terminal CUB domain releasing the core domain is necessary for unmasking the receptor-binding epitopes of the core domain. Cleavage after Arg-247 or Arg-249 by urokinase plasminogen activator gives rise to the active form. As to expression, expressed at high levels in the heart, pancreas, adrenal gland and ovary and at low levels in placenta, liver, kidney, prostate, testis, small intestine, spleen and colon. In the kidney, expressed by the visceral epithelial cells of the glomeruli. A widespread expression is also seen in the medial smooth muscle cells of arteries and arterioles, as well as in smooth muscle cells of vasa rectae in the medullary area. Expressed in the adventitial connective tissue surrounding the suprarenal artery. In chronic obstructive nephropathy, a persistent expression is seen in glomerular visceral epithelial cells and vascular smooth muscle cells, as well as de novo expression by periglomerular interstitial cells and by some neointimal cells of atherosclerotic vessels. Expression in normal prostate is seen preferentially in the mesenchyme of the gland while expression is increased and more profuse in prostate carcinoma. Expressed in many ovarian, lung, renal and brain cancer-derived cell lines.

It is found in the secreted. Growth factor that plays an essential role in the regulation of embryonic development, cell proliferation, cell migration, survival and chemotaxis. Potent mitogen for cells of mesenchymal origin. Plays an important role in wound healing. Induces macrophage recruitment, increased interstitial pressure, and blood vessel maturation during angiogenesis. Can initiate events that lead to a mesangial proliferative glomerulonephritis, including influx of monocytes and macrophages and production of extracellular matrix. In Homo sapiens (Human), this protein is Platelet-derived growth factor D (PDGFD).